Here is a 467-residue protein sequence, read N- to C-terminus: Polygalacturonase (467 aa).

Positions 1-27 are cleaved as a signal peptide; it reads MALQRRFFQFVIITLLIPSFILGYTSA. Asp-283 serves as the catalytic Proton donor. The N-linked (GlcNAc...) asparagine glycan is linked to Asn-290. His-306 is an active-site residue.

This sequence belongs to the glycosyl hydrolase 28 family.

It is found in the secreted. Its subcellular location is the cell wall. The enzyme catalyses (1,4-alpha-D-galacturonosyl)n+m + H2O = (1,4-alpha-D-galacturonosyl)n + (1,4-alpha-D-galacturonosyl)m.. Its function is as follows. Acts in concert with the pectinesterase, in the ripening process. Is involved in cell wall metabolism, specifically in polyuronide degradation. In Actinidia deliciosa (Kiwi), this protein is Polygalacturonase.